Here is a 350-residue protein sequence, read N- to C-terminus: Anthranilate phosphoribosyltransferase (350 aa).

5-phospho-alpha-D-ribose 1-diphosphate is bound by residues Gly94, 97-98 (GD), Thr102, 104-107 (NIST), 122-130 (KHGNRSVSS), and Ser134. Position 94 (Gly94) interacts with anthranilate. Ser106 contacts Mg(2+). Anthranilate is bound at residue Asn125. An anthranilate-binding site is contributed by Arg180. Positions 239 and 240 each coordinate Mg(2+).

The protein belongs to the anthranilate phosphoribosyltransferase family. In terms of assembly, homodimer. It depends on Mg(2+) as a cofactor.

The catalysed reaction is N-(5-phospho-beta-D-ribosyl)anthranilate + diphosphate = 5-phospho-alpha-D-ribose 1-diphosphate + anthranilate. It functions in the pathway amino-acid biosynthesis; L-tryptophan biosynthesis; L-tryptophan from chorismate: step 2/5. Its function is as follows. Catalyzes the transfer of the phosphoribosyl group of 5-phosphorylribose-1-pyrophosphate (PRPP) to anthranilate to yield N-(5'-phosphoribosyl)-anthranilate (PRA). The polypeptide is Anthranilate phosphoribosyltransferase (Geotalea daltonii (strain DSM 22248 / JCM 15807 / FRC-32) (Geobacter daltonii)).